The sequence spans 150 residues: 3-dehydroquinate dehydratase (150 aa).

The active-site Proton acceptor is the Tyr-22. Residues Asn-73, His-79, and Asp-86 each coordinate substrate. His-99 acts as the Proton donor in catalysis. Substrate is bound by residues 100–101 (LT) and Arg-110.

Belongs to the type-II 3-dehydroquinase family. As to quaternary structure, homododecamer.

The catalysed reaction is 3-dehydroquinate = 3-dehydroshikimate + H2O. It participates in metabolic intermediate biosynthesis; chorismate biosynthesis; chorismate from D-erythrose 4-phosphate and phosphoenolpyruvate: step 3/7. Catalyzes a trans-dehydration via an enolate intermediate. This chain is 3-dehydroquinate dehydratase, found in Desulforudis audaxviator (strain MP104C).